We begin with the raw amino-acid sequence, 221 residues long: Tetraspanin-2 (221 aa).

The Cytoplasmic segment spans residues 1–13 (MGRFRGGLRCIKY). The helical transmembrane segment at 14 to 34 (LLLGFNLLFWLAGSAVIAFGL) threads the bilayer. Residues 35 to 54 (WFRFGGAIKELSSEDKSPEY) lie on the Extracellular side of the membrane. A helical membrane pass occupies residues 55–75 (FYVGLYVLVGAGALMMAVGFF). Topologically, residues 76–90 (GCCGAMRESQCVLGS) are cytoplasmic. Residues 91-111 (FFTCLLVIFAAEVTTGVFAFI) traverse the membrane as a helical segment. Residues 112-188 (GKGVAIRHVQ…ETIISVKLQL (77 aa)) lie on the Extracellular side of the membrane. N139 carries N-linked (GlcNAc...) asparagine glycosylation. The helical transmembrane segment at 189-209 (IGIVGIGIAGLTIFGMIFSMV) threads the bilayer. At 210–221 (LCCAIRNSRDVI) the chain is on the cytoplasmic side.

Belongs to the tetraspanin (TM4SF) family.

Its subcellular location is the membrane. Its function is as follows. May play a role in signalling in oligodendrocytes in the early stages of their terminal differentiation into myelin-forming glia and may also function in stabilizing the mature sheath. The sequence is that of Tetraspanin-2 (TSPAN2) from Homo sapiens (Human).